The chain runs to 336 residues: Ferrochelatase (336 aa).

Fe cation contacts are provided by His206 and Glu287.

This sequence belongs to the ferrochelatase family.

The protein localises to the cytoplasm. It catalyses the reaction heme b + 2 H(+) = protoporphyrin IX + Fe(2+). Its pathway is porphyrin-containing compound metabolism; protoheme biosynthesis; protoheme from protoporphyrin-IX: step 1/1. In terms of biological role, catalyzes the ferrous insertion into protoporphyrin IX. In Neisseria meningitidis serogroup B (strain ATCC BAA-335 / MC58), this protein is Ferrochelatase.